Here is a 629-residue protein sequence, read N- to C-terminus: Serine/threonine-protein kinase ICK (629 aa).

Positions 4-284 (YTTIKQLGDG…ASQALRYPYF (281 aa)) constitute a Protein kinase domain. ATP is bound by residues 10 to 18 (LGDGTYGSV) and K33. D125 (proton acceptor) is an active-site residue. T157 is subject to Phosphothreonine. Y159 carries the phosphotyrosine modification. At S161 the chain carries Phosphoserine. 3 disordered regions span residues 292–322 (ISTQDSGKPQKDVQDKTGPPPYVKPAPPAQA), 454–482 (PSEPVGTGTSVSTQASSQRRDTPTLQSTA), and 579–629 (GYSS…PSRR). Positions 309–321 (GPPPYVKPAPPAQ) are enriched in pro residues. Over residues 460–482 (TGTSVSTQASSQRRDTPTLQSTA) the composition is skewed to polar residues.

Belongs to the protein kinase superfamily. CMGC Ser/Thr protein kinase family. CDC2/CDKX subfamily. The cofactor is Mg(2+). In terms of processing, autophosphorylated on serine and threonine residues. Phosphorylation at Thr-157 increases kinase activity. As to expression, expressed in embryonic heart from day 11. Highly expressed in the uterus and at lower levels in brain, heart, lung, kidney, skeletal muscle, ovary and liver in adult tissues.

It localises to the cytoplasm. It is found in the cell projection. Its subcellular location is the cilium. The protein localises to the nucleus. The protein resides in the cytoskeleton. It localises to the cilium basal body. It catalyses the reaction L-seryl-[protein] + ATP = O-phospho-L-seryl-[protein] + ADP + H(+). It carries out the reaction L-threonyl-[protein] + ATP = O-phospho-L-threonyl-[protein] + ADP + H(+). In terms of biological role, required for ciliogenesis, particularly in neuronal and retinal progenitor cells. Phosphorylates KIF3A. Involved in the control of ciliary length. Regulates the ciliary localization of SHH pathway components as well as the localization of IFT components at ciliary tips. May play a role in cardiac development. Regulates intraflagellar transport (IFT) speed and negatively regulates cilium length in a cAMP and mTORC1 signaling-dependent manner and this regulation requires its kinase activity. This chain is Serine/threonine-protein kinase ICK (Cilk1), found in Rattus norvegicus (Rat).